Reading from the N-terminus, the 96-residue chain is Large ribosomal subunit protein eL30 (96 aa).

Belongs to the eukaryotic ribosomal protein eL30 family.

This chain is Large ribosomal subunit protein eL30, found in Methanosphaerula palustris (strain ATCC BAA-1556 / DSM 19958 / E1-9c).